The primary structure comprises 102 residues: MACARPLTGRTLPADESPCLTLILEPVSGEAAKNSTPVVVDKPGKPPPKRHRRQYNVTVSCNDCDKRLNFSVKTTCSTILTLQQLLTEDLDFLCSFCEAKNG.

Positions 1–36 are E7 terminal domain; that stretch reads MACARPLTGRTLPADESPCLTLILEPVSGEAAKNST. The segment at 61–97 is a zinc-finger region; that stretch reads CNDCDKRLNFSVKTTCSTILTLQQLLTEDLDFLCSFC. Residues 79–87 carry the Nuclear export signal motif; that stretch reads ILTLQQLLT.

Belongs to the papillomaviridae E7 protein family. In terms of assembly, homodimer. Homooligomer. Interacts with host RB1; this interaction induces dissociation of RB1-E2F1 complex thereby disrupting RB1 activity. Interacts with host EP300; this interaction represses EP300 transcriptional activity. Interacts with protein E2; this interaction inhibits E7 oncogenic activity. Interacts with host TMEM173/STING; this interaction impairs the ability of TMEM173/STING to sense cytosolic DNA and promote the production of type I interferon (IFN-alpha and IFN-beta). In terms of processing, highly phosphorylated.

The protein resides in the host cytoplasm. It is found in the host nucleus. Functionally, plays a role in viral genome replication by driving entry of quiescent cells into the cell cycle. Stimulation of progression from G1 to S phase allows the virus to efficiently use the cellular DNA replicating machinery to achieve viral genome replication. E7 protein has both transforming and trans-activating activities. Induces the disassembly of the E2F1 transcription factor from RB1, with subsequent transcriptional activation of E2F1-regulated S-phase genes. Interferes with host histone deacetylation mediated by HDAC1 and HDAC2, leading to transcription activation. Also plays a role in the inhibition of both antiviral and antiproliferative functions of host interferon alpha. Interaction with host TMEM173/STING impairs the ability of TMEM173/STING to sense cytosolic DNA and promote the production of type I interferon (IFN-alpha and IFN-beta). In Odocoileus virginianus (White-tailed deer), this protein is Protein E7.